Consider the following 362-residue polypeptide: Chorismate synthase (362 aa).

The NADP(+) site is built by Arg-48 and Arg-54. Residues 125 to 127, 238 to 239, Gly-278, 293 to 297, and Arg-319 contribute to the FMN site; these read RSS, NA, and KPTSS.

Belongs to the chorismate synthase family. As to quaternary structure, homotetramer. FMNH2 is required as a cofactor.

It catalyses the reaction 5-O-(1-carboxyvinyl)-3-phosphoshikimate = chorismate + phosphate. The protein operates within metabolic intermediate biosynthesis; chorismate biosynthesis; chorismate from D-erythrose 4-phosphate and phosphoenolpyruvate: step 7/7. Functionally, catalyzes the anti-1,4-elimination of the C-3 phosphate and the C-6 proR hydrogen from 5-enolpyruvylshikimate-3-phosphate (EPSP) to yield chorismate, which is the branch point compound that serves as the starting substrate for the three terminal pathways of aromatic amino acid biosynthesis. This reaction introduces a second double bond into the aromatic ring system. The chain is Chorismate synthase from Tolumonas auensis (strain DSM 9187 / NBRC 110442 / TA 4).